A 455-amino-acid chain; its full sequence is Protein U54 (455 aa).

It belongs to the herpesviridae UL82 family.

In Homo sapiens (Human), this protein is Protein U54 (U54).